The primary structure comprises 424 residues: Serine hydroxymethyltransferase (424 aa).

Residues L113 and 117–119 (GHL) contribute to the (6S)-5,6,7,8-tetrahydrofolate site. K222 carries the post-translational modification N6-(pyridoxal phosphate)lysine. 361 to 363 (SPF) is a binding site for (6S)-5,6,7,8-tetrahydrofolate.

It belongs to the SHMT family. Homodimer. Requires pyridoxal 5'-phosphate as cofactor.

It is found in the cytoplasm. The catalysed reaction is (6R)-5,10-methylene-5,6,7,8-tetrahydrofolate + glycine + H2O = (6S)-5,6,7,8-tetrahydrofolate + L-serine. It functions in the pathway one-carbon metabolism; tetrahydrofolate interconversion. The protein operates within amino-acid biosynthesis; glycine biosynthesis; glycine from L-serine: step 1/1. Its function is as follows. Catalyzes the reversible interconversion of serine and glycine with tetrahydrofolate (THF) serving as the one-carbon carrier. This reaction serves as the major source of one-carbon groups required for the biosynthesis of purines, thymidylate, methionine, and other important biomolecules. Also exhibits THF-independent aldolase activity toward beta-hydroxyamino acids, producing glycine and aldehydes, via a retro-aldol mechanism. This chain is Serine hydroxymethyltransferase, found in Flavobacterium johnsoniae (strain ATCC 17061 / DSM 2064 / JCM 8514 / BCRC 14874 / CCUG 350202 / NBRC 14942 / NCIMB 11054 / UW101) (Cytophaga johnsonae).